The primary structure comprises 344 residues: RNA 3'-terminal phosphate cyclase (344 aa).

ATP contacts are provided by residues glutamine 102 and 284–288; that span reads FLGDQ. Catalysis depends on histidine 308, which acts as the Tele-AMP-histidine intermediate.

The protein belongs to the RNA 3'-terminal cyclase family. Type 1 subfamily.

The protein localises to the cytoplasm. The catalysed reaction is a 3'-end 3'-phospho-ribonucleotide-RNA + ATP = a 3'-end 2',3'-cyclophospho-ribonucleotide-RNA + AMP + diphosphate. Its function is as follows. Catalyzes the conversion of 3'-phosphate to a 2',3'-cyclic phosphodiester at the end of RNA. The mechanism of action of the enzyme occurs in 3 steps: (A) adenylation of the enzyme by ATP; (B) transfer of adenylate to an RNA-N3'P to produce RNA-N3'PP5'A; (C) and attack of the adjacent 2'-hydroxyl on the 3'-phosphorus in the diester linkage to produce the cyclic end product. The biological role of this enzyme is unknown but it is likely to function in some aspects of cellular RNA processing. This chain is RNA 3'-terminal phosphate cyclase, found in Thermococcus gammatolerans (strain DSM 15229 / JCM 11827 / EJ3).